The chain runs to 222 residues: Glycerol-3-phosphate acyltransferase (222 aa).

6 helical membrane-spanning segments follow: residues 4–24 (ALLL…IPTG), 56–76 (PAAI…VALV), 87–107 (ALPA…VVLG), 130–150 (FMLN…VIFF), 153–173 (IVSL…LALQ), and 174–191 (LPPP…YVIV).

It belongs to the PlsY family. Probably interacts with PlsX.

The protein localises to the cell inner membrane. The enzyme catalyses an acyl phosphate + sn-glycerol 3-phosphate = a 1-acyl-sn-glycero-3-phosphate + phosphate. It participates in lipid metabolism; phospholipid metabolism. Functionally, catalyzes the transfer of an acyl group from acyl-phosphate (acyl-PO(4)) to glycerol-3-phosphate (G3P) to form lysophosphatidic acid (LPA). This enzyme utilizes acyl-phosphate as fatty acyl donor, but not acyl-CoA or acyl-ACP. This is Glycerol-3-phosphate acyltransferase from Synechocystis sp. (strain ATCC 27184 / PCC 6803 / Kazusa).